The chain runs to 178 residues: Large ribosomal subunit protein bL25 (178 aa).

This sequence belongs to the bacterial ribosomal protein bL25 family. CTC subfamily. As to quaternary structure, part of the 50S ribosomal subunit; part of the 5S rRNA/L5/L18/L25 subcomplex. Contacts the 5S rRNA. Binds to the 5S rRNA independently of L5 and L18.

Its function is as follows. This is one of the proteins that binds to the 5S RNA in the ribosome where it forms part of the central protuberance. This chain is Large ribosomal subunit protein bL25, found in Campylobacter jejuni subsp. jejuni serotype O:6 (strain 81116 / NCTC 11828).